We begin with the raw amino-acid sequence, 221 residues long: Hypoxanthine-guanine phosphoribosyltransferase (221 aa).

Ser2 carries the post-translational modification N-acetylserine. Residues Lys85, Asp110 to Thr118, Lys159, and Trp188 to Glu194 each bind GMP. Residue Asp114 is the Proton acceptor of the active site.

It belongs to the purine/pyrimidine phosphoribosyltransferase family. Dimer. Requires Mg(2+) as cofactor.

It is found in the cytoplasm. The protein resides in the nucleus. It carries out the reaction IMP + diphosphate = hypoxanthine + 5-phospho-alpha-D-ribose 1-diphosphate. It catalyses the reaction GMP + diphosphate = guanine + 5-phospho-alpha-D-ribose 1-diphosphate. The protein operates within purine metabolism; IMP biosynthesis via salvage pathway; IMP from hypoxanthine: step 1/1. With respect to regulation, subject to feedback inhibition by GMP. In terms of biological role, converts guanine to guanosine monophosphate, and hypoxanthine to inosine monophosphate. Transfers the 5-phosphoribosyl group from 5-phosphoribosylpyrophosphate onto the purine. Plays a central role in the generation of purine nucleotides through the purine salvage pathway. This Saccharomyces cerevisiae (strain ATCC 204508 / S288c) (Baker's yeast) protein is Hypoxanthine-guanine phosphoribosyltransferase (HPT1).